A 403-amino-acid chain; its full sequence is Malate dehydrogenase, chloroplastic (403 aa).

Residues 1–80 constitute a chloroplast transit peptide; sequence MATATSASLF…DKKPYGFKIN (80 aa). Residues 89–95 and aspartate 115 each bind NAD(+); that span reads GAAGGIG. Arginine 162 and arginine 168 together coordinate substrate. NAD(+) is bound by residues asparagine 175 and 198 to 200; that span reads ISN. Asparagine 200 and arginine 234 together coordinate substrate. Histidine 258 (proton acceptor) is an active-site residue. Methionine 309 contributes to the NAD(+) binding site.

The protein belongs to the LDH/MDH superfamily. MDH type 1 family. Homodimer. Expressed in rosette leaves. Expressed in meristematic regions of roots and shoots, cotyledons, young leaves, trichomes, stamen, pollen, tapetum, gynoecium and ovules.

Its subcellular location is the plastid. The protein localises to the chloroplast stroma. The enzyme catalyses (S)-malate + NAD(+) = oxaloacetate + NADH + H(+). Functionally, catalyzes a reversible NAD-dependent dehydrogenase reaction involved in central metabolism and redox homeostasis between organelle compartments. Plays a key role in the metabolism of dark chloroplasts and non-green plastids. Essential for embryo viability. Plays an essential role in heterotrophic metabolism in embryos, and autotrophic metabolism in photosynthetic tissues as well. The protein is Malate dehydrogenase, chloroplastic of Arabidopsis thaliana (Mouse-ear cress).